The primary structure comprises 540 residues: MAKDIKFSADARSAMVRGVDILADTVKVTLGPKGRNVVLEKSFGSPLITNDGVTIAKEIELEDHFENMGAKLVSEVASKTNDIAGDGTTTATVLTQAIVREGIKNVTAGANPIGIRRGIEAAVATAVSALKETAIPVSNKEAIAQVAAVSSRSEKVGEYISEAMEKVGNDGVITIEESKGMETELDVVEGMQFDRGYLSQYMVTDSEKMVADLDNPYILITDKKISNIQEILPLLESILKTNRPLLIIADDVDGEALPTLVLNKIRGTFNVVAVKAPGFGDRRKAMLEDIAILTGGTVITEDLGLELKDATIEALGQASKVTVDKDSTVIVEGAGNPEAIANRVAVIKSQIESATSEFDKEKLQERLAKLSGGVAVIKVGAATETELKEMKLRIEDALNATRAAVEEGIVSGGGTAFVSVLDAVSGIELTGDEATGRNIVLRALEEPVRQIALNAGFEGSIVIDRLKNSEAGAGFNAATGEWVNMIEAGIIDPVKVTRSALQNAASVASLILTTEAVVANQPEPASPAPAMDPSMMGGMM.

ATP-binding positions include 29-32 (TLGP), 86-90 (DGTTT), G413, 476-478 (NAA), and D492.

This sequence belongs to the chaperonin (HSP60) family. As to quaternary structure, forms a cylinder of 14 subunits composed of two heptameric rings stacked back-to-back. Interacts with the co-chaperonin GroES.

The protein resides in the cytoplasm. The enzyme catalyses ATP + H2O + a folded polypeptide = ADP + phosphate + an unfolded polypeptide.. Functionally, together with its co-chaperonin GroES, plays an essential role in assisting protein folding. The GroEL-GroES system forms a nano-cage that allows encapsulation of the non-native substrate proteins and provides a physical environment optimized to promote and accelerate protein folding. This Streptococcus gordonii (strain Challis / ATCC 35105 / BCRC 15272 / CH1 / DL1 / V288) protein is Chaperonin GroEL.